The following is a 337-amino-acid chain: Protein-methionine-sulfoxide reductase catalytic subunit MsrP (337 aa).

Positions Met-1–Ala-50 form a signal peptide, tat-type signal. Residues Asn-94, Tyr-97–Glu-98, Cys-152, Thr-187, Asn-237, Arg-242, and Ser-253–Lys-255 each bind Mo-molybdopterin.

It belongs to the MsrP family. Heterodimer of a catalytic subunit (MsrP) and a heme-binding subunit (MsrQ). Mo-molybdopterin serves as cofactor. In terms of processing, predicted to be exported by the Tat system. The position of the signal peptide cleavage has not been experimentally proven.

It is found in the periplasm. The enzyme catalyses L-methionyl-[protein] + a quinone + H2O = L-methionyl-(S)-S-oxide-[protein] + a quinol. It catalyses the reaction L-methionyl-[protein] + a quinone + H2O = L-methionyl-(R)-S-oxide-[protein] + a quinol. Its function is as follows. Part of the MsrPQ system that repairs oxidized periplasmic proteins containing methionine sulfoxide residues (Met-O), using respiratory chain electrons. Thus protects these proteins from oxidative-stress damage caused by reactive species of oxygen and chlorine generated by the host defense mechanisms. MsrPQ is essential for the maintenance of envelope integrity under bleach stress, rescuing a wide series of structurally unrelated periplasmic proteins from methionine oxidation. The catalytic subunit MsrP is non-stereospecific, being able to reduce both (R-) and (S-) diastereoisomers of methionine sulfoxide. This is Protein-methionine-sulfoxide reductase catalytic subunit MsrP from Pseudomonas syringae pv. tomato (strain ATCC BAA-871 / DC3000).